The chain runs to 99 residues: Acylphosphatase (99 aa).

In terms of domain architecture, Acylphosphatase-like spans 5-97 (VRQVMIRGRV…RPGERFSQLP (93 aa)). Catalysis depends on residues Arg20 and Asn38.

Belongs to the acylphosphatase family.

It carries out the reaction an acyl phosphate + H2O = a carboxylate + phosphate + H(+). The sequence is that of Acylphosphatase (acyP) from Nitrobacter winogradskyi (strain ATCC 25391 / DSM 10237 / CIP 104748 / NCIMB 11846 / Nb-255).